We begin with the raw amino-acid sequence, 730 residues long: MVRWQTWPLLLLFQLVTCQQLQQRIVEAPKDTLAAVGETAILTCRVEHQQGPVQWMKDDFGLGTDRDKPLPGNKRYRMVGSAANGEYNLEISNVTLFDDDDFACQISESDHAKAVVSSKAKLTVLVRPTPPKIVKSHHSLKAIAGDPITQSCLSRKGKPPPTIGWAIASDEHGKHIVSWLGESRSKFGGIHAKPEISQETVIAHVNETTQVEEGGNNSREDSSIYSIMSNLSFIPRPEDDHKYLICISQHMTFPNKIEVDSVKLSLRYAPQINLTVASKLPLRENGSALLACNVNAKPLDNVKISWYKGNQKLRETGDTLTFETLKMEDHNRDIFCEATNEIGTTRGSIKLNVAFGARIMSTSQDKEVNEGDNAFFHCATLANPAPAIFWTRGDSDEIIGHGENLTLENVRTWQQGNYNCTATVEGFRKQILSHYLHIRGPPTVSMKDEVSASLDEATEIICEISGRPKTNNVRWTVNGKEINFNNGRITVHQYPKPYGKESILKIKDLKEEDFGVYNCSANNGLGFDNRGTLLKKRNILDWIVITAKFDRMVALAIISAGVLLVSLLCCLCMCRSNCRSRKSKFIDDQSDVTVKCEALDGQYFPEMYSSSPVDNVHLSTKDYISIPQNNPDLDFLGATGSFGPPGGLYPKCFNNSANEYIYNRYEHSYGSFGSGLSTPGGVSDMYGVAMSDKLPVMETLQEVETPKTSNYNFLSSPEVVRPISRTSTHV.

The N-terminal stretch at 1–18 (MVRWQTWPLLLLFQLVTC) is a signal peptide. At 19–551 (QQLQQRIVEA…WIVITAKFDR (533 aa)) the chain is on the extracellular side. 5 Ig-like domains span residues 23 to 123 (QRIV…AKLT), 131 to 265 (PKIV…VKLS), 270 to 352 (PQIN…IKLN), 357 to 433 (ARIM…QILS), and 441 to 540 (PPTV…RNIL). Cystine bridges form between C44–C104, C152–C246, C292–C336, C378–C420, and C462–C519. 2 N-linked (GlcNAc...) asparagine glycosylation sites follow: N93 and N206. Residues 552 to 572 (MVALAIISAGVLLVSLLCCLC) form a helical membrane-spanning segment. Residues 573 to 730 (MCRSNCRSRK…RPISRTSTHV (158 aa)) lie on the Cytoplasmic side of the membrane.

It belongs to the immunoglobulin superfamily. Interacts with skr-1. Interacts with syg-2. Interacts with the WAVE regulatory complex; the interaction leads to formation of a synaptic F-actin network that is required for synapse formation and axon branching. In terms of tissue distribution, expression in head motor neurons, occasionally in HSN neurons and weakly in other cells in the vulval region. Expressed in the primary synapse region of HSNL motor neuron.

Its subcellular location is the cell membrane. It localises to the cell projection. The protein localises to the axon. The protein resides in the synapse. Cell adhesion protein. Involved in synapse formation in the HSNL egg-laying motor neuron. Inhibits assembly of the SCF(sel-10) E3 ubiquitin ligase complex at synapses, and protects them from elimination. Also required for F-actin assembly at the synaptic region and for axon branch formation. The sequence is that of Synaptogenesis protein syg-1 from Caenorhabditis elegans.